The primary structure comprises 387 residues: Structural protein ORF387 (387 aa).

The stretch at 315–387 (KTFQEMVKVA…EEKNNTVKLS (73 aa)) forms a coiled coil. Residues 365–387 (LTEEQQQQNETEEEEKNNTVKLS) are disordered.

The protein localises to the virion. The chain is Structural protein ORF387 from Acidianus convivator (ATV).